The chain runs to 232 residues: 2,3,4,5-tetrahydropyridine-2,6-dicarboxylate N-acetyltransferase (232 aa).

Belongs to the transferase hexapeptide repeat family. DapH subfamily.

The catalysed reaction is (S)-2,3,4,5-tetrahydrodipicolinate + acetyl-CoA + H2O = L-2-acetamido-6-oxoheptanedioate + CoA. It functions in the pathway amino-acid biosynthesis; L-lysine biosynthesis via DAP pathway; LL-2,6-diaminopimelate from (S)-tetrahydrodipicolinate (acetylase route): step 1/3. Its function is as follows. Catalyzes the transfer of an acetyl group from acetyl-CoA to tetrahydrodipicolinate. The protein is 2,3,4,5-tetrahydropyridine-2,6-dicarboxylate N-acetyltransferase of Streptococcus thermophilus (strain CNRZ 1066).